A 338-amino-acid chain; its full sequence is Anthranilate phosphoribosyltransferase (338 aa).

5-phospho-alpha-D-ribose 1-diphosphate is bound by residues glycine 81, 84 to 85 (GD), serine 89, 91 to 94 (NVST), 109 to 117 (KHGNRALSS), and alanine 121. Glycine 81 is an anthranilate binding site. Serine 93 serves as a coordination point for Mg(2+). An anthranilate-binding site is contributed by asparagine 112. Arginine 167 provides a ligand contact to anthranilate. Mg(2+) is bound by residues aspartate 226 and glutamate 227.

This sequence belongs to the anthranilate phosphoribosyltransferase family. In terms of assembly, homodimer. Mg(2+) is required as a cofactor.

The catalysed reaction is N-(5-phospho-beta-D-ribosyl)anthranilate + diphosphate = 5-phospho-alpha-D-ribose 1-diphosphate + anthranilate. It functions in the pathway amino-acid biosynthesis; L-tryptophan biosynthesis; L-tryptophan from chorismate: step 2/5. Functionally, catalyzes the transfer of the phosphoribosyl group of 5-phosphorylribose-1-pyrophosphate (PRPP) to anthranilate to yield N-(5'-phosphoribosyl)-anthranilate (PRA). The protein is Anthranilate phosphoribosyltransferase of Rhodopseudomonas palustris (strain ATCC BAA-98 / CGA009).